A 242-amino-acid chain; its full sequence is Proteasome subunit alpha (242 aa).

This sequence belongs to the peptidase T1A family. As to quaternary structure, the 20S proteasome core is composed of 14 alpha and 14 beta subunits that assemble into four stacked heptameric rings, resulting in a barrel-shaped structure. The two inner rings, each composed of seven catalytic beta subunits, are sandwiched by two outer rings, each composed of seven alpha subunits. The catalytic chamber with the active sites is on the inside of the barrel. Has a gated structure, the ends of the cylinder being occluded by the N-termini of the alpha-subunits. Is capped at one or both ends by the proteasome regulatory ATPase, PAN.

Its subcellular location is the cytoplasm. With respect to regulation, the formation of the proteasomal ATPase PAN-20S proteasome complex, via the docking of the C-termini of PAN into the intersubunit pockets in the alpha-rings, triggers opening of the gate for substrate entry. Interconversion between the open-gate and close-gate conformations leads to a dynamic regulation of the 20S proteasome proteolysis activity. In terms of biological role, component of the proteasome core, a large protease complex with broad specificity involved in protein degradation. The sequence is that of Proteasome subunit alpha from Sulfurisphaera tokodaii (strain DSM 16993 / JCM 10545 / NBRC 100140 / 7) (Sulfolobus tokodaii).